Here is a 494-residue protein sequence, read N- to C-terminus: Anaerobic nitric oxide reductase flavorubredoxin (494 aa).

Residues 30 to 210 (TKGTSYNSYL…PFSALVTAKI (181 aa)) are zinc metallo-hydrolase. Fe cation is bound by residues His-79, Glu-81, Asp-83, His-147, Asp-166, and His-227. In terms of domain architecture, Flavodoxin-like spans 254-393 (ITIFYDSMSN…ECREHGQQIA (140 aa)). Residues 260–264 (SMSNN) and 342–369 (AFGS…ETAI) contribute to the FMN site. The region spanning 441 to 492 (CQCMVCTVCNWVYDPAKGEPNQGIEVGTTWADVPDYFLCPECHLGKDVFVEY) is the Rubredoxin-like domain. The Fe cation site is built by Cys-446, Cys-449, Cys-479, and Cys-482.

The protein in the N-terminal section; belongs to the zinc metallo-hydrolase group 3 family. As to quaternary structure, homotetramer. Fe cation serves as cofactor. The cofactor is FMN.

Its subcellular location is the cytoplasm. Its pathway is nitrogen metabolism; nitric oxide reduction. Functionally, anaerobic nitric oxide reductase; uses NADH to detoxify nitric oxide (NO), protecting several 4Fe-4S NO-sensitive enzymes. Has at least 2 reductase partners, only one of which (NorW, flavorubredoxin reductase) has been identified. NO probably binds to the di-iron center; electrons enter from the NorW at rubredoxin and are transferred sequentially to the FMN center and the di-iron center. Also able to function as an aerobic oxygen reductase. The protein is Anaerobic nitric oxide reductase flavorubredoxin of Vibrio vulnificus (strain YJ016).